Here is a 300-residue protein sequence, read N- to C-terminus: Porphobilinogen deaminase (300 aa).

At Cys239 the chain carries S-(dipyrrolylmethanemethyl)cysteine.

Belongs to the HMBS family. As to quaternary structure, monomer. It depends on dipyrromethane as a cofactor.

It carries out the reaction 4 porphobilinogen + H2O = hydroxymethylbilane + 4 NH4(+). Its pathway is porphyrin-containing compound metabolism; protoporphyrin-IX biosynthesis; coproporphyrinogen-III from 5-aminolevulinate: step 2/4. Tetrapolymerization of the monopyrrole PBG into the hydroxymethylbilane pre-uroporphyrinogen in several discrete steps. In Francisella tularensis subsp. tularensis (strain FSC 198), this protein is Porphobilinogen deaminase.